The chain runs to 312 residues: tRNA-cytidine(32) 2-sulfurtransferase (312 aa).

Residues 47 to 52 (SGGKDS) carry the PP-loop motif motif. Residues Cys122, Cys125, and Cys213 each contribute to the [4Fe-4S] cluster site.

It belongs to the TtcA family. Homodimer. Mg(2+) is required as a cofactor. [4Fe-4S] cluster serves as cofactor.

Its subcellular location is the cytoplasm. It catalyses the reaction cytidine(32) in tRNA + S-sulfanyl-L-cysteinyl-[cysteine desulfurase] + AH2 + ATP = 2-thiocytidine(32) in tRNA + L-cysteinyl-[cysteine desulfurase] + A + AMP + diphosphate + H(+). Its pathway is tRNA modification. Its function is as follows. Catalyzes the ATP-dependent 2-thiolation of cytidine in position 32 of tRNA, to form 2-thiocytidine (s(2)C32). The sulfur atoms are provided by the cysteine/cysteine desulfurase (IscS) system. This chain is tRNA-cytidine(32) 2-sulfurtransferase, found in Actinobacillus succinogenes (strain ATCC 55618 / DSM 22257 / CCUG 43843 / 130Z).